A 511-amino-acid chain; its full sequence is NAD(P)H-quinone oxidoreductase subunit 2 B, chloroplastic (511 aa).

Transmembrane regions (helical) follow at residues 24–44, 57–77, 99–119, 124–144, 149–169, 183–203, 227–247, 295–315, 323–343, 354–374, 395–415, 418–438, and 484–504; these read LLLF…GLIL, IPWL…ALLF, IFQF…VEYI, MAIT…MFLC, LITI…LSGY, YLLM…WLYG, PGIS…LSPA, WHLL…LIAI, MLAY…IVGD, YMLF…LFGL, ALSL…AGFF, LHLF…IGLL, and MIVC…IIAI.

It belongs to the complex I subunit 2 family. NDH is composed of at least 16 different subunits, 5 of which are encoded in the nucleus.

The protein localises to the plastid. The protein resides in the chloroplast thylakoid membrane. It catalyses the reaction a plastoquinone + NADH + (n+1) H(+)(in) = a plastoquinol + NAD(+) + n H(+)(out). It carries out the reaction a plastoquinone + NADPH + (n+1) H(+)(in) = a plastoquinol + NADP(+) + n H(+)(out). In terms of biological role, NDH shuttles electrons from NAD(P)H:plastoquinone, via FMN and iron-sulfur (Fe-S) centers, to quinones in the photosynthetic chain and possibly in a chloroplast respiratory chain. The immediate electron acceptor for the enzyme in this species is believed to be plastoquinone. Couples the redox reaction to proton translocation, and thus conserves the redox energy in a proton gradient. The sequence is that of NAD(P)H-quinone oxidoreductase subunit 2 B, chloroplastic from Nandina domestica (Heavenly bamboo).